A 188-amino-acid polypeptide reads, in one-letter code: Dual specificity protein phosphatase 18 (188 aa).

The 142-residue stretch at 19-160 folds into the Tyrosine-protein phosphatase domain; that stretch reads GLSQITSSLY…LIHYEFQLFG (142 aa). The sufficient for mitochondrial localization stretch occupies residues 95 to 141; sequence MKQGRTLLHCAAGVSRSAALCLAYLMKYHAMSLLDAHTWTKSCRPII. Catalysis depends on cysteine 104, which acts as the Phosphocysteine intermediate.

The protein belongs to the protein-tyrosine phosphatase family. Non-receptor class dual specificity subfamily.

It localises to the cytoplasm. The protein resides in the nucleus. Its subcellular location is the mitochondrion inner membrane. The enzyme catalyses O-phospho-L-tyrosyl-[protein] + H2O = L-tyrosyl-[protein] + phosphate. It carries out the reaction O-phospho-L-seryl-[protein] + H2O = L-seryl-[protein] + phosphate. It catalyses the reaction O-phospho-L-threonyl-[protein] + H2O = L-threonyl-[protein] + phosphate. Functionally, can dephosphorylate single and diphosphorylated synthetic MAPK peptides, with preference for the phosphotyrosine and diphosphorylated forms over phosphothreonine. In vitro, dephosphorylates p-nitrophenyl phosphate (pNPP). The sequence is that of Dual specificity protein phosphatase 18 (DUSP18) from Bos taurus (Bovine).